The primary structure comprises 252 residues: Glycerol-3-phosphate acyltransferase (252 aa).

Helical transmembrane passes span 6 to 26 (SVAMAYILTLIISPLYSYLIG), 66 to 86 (ILTLFLDIVKPIITISLTYII), 104 to 124 (AILVYFGGIFTIIGHCYPIFF), 140 to 160 (ITIDPIVAVIGIITLLIILLI), 164 to 184 (MSLSAMITATITCFLVLIPGI), and 204 to 224 (VIKGTWYVWLFLLISASILIY).

Belongs to the PlsY family. Probably interacts with PlsX.

The protein localises to the cell membrane. The catalysed reaction is an acyl phosphate + sn-glycerol 3-phosphate = a 1-acyl-sn-glycero-3-phosphate + phosphate. The protein operates within lipid metabolism; phospholipid metabolism. Functionally, catalyzes the transfer of an acyl group from acyl-phosphate (acyl-PO(4)) to glycerol-3-phosphate (G3P) to form lysophosphatidic acid (LPA). This enzyme utilizes acyl-phosphate as fatty acyl donor, but not acyl-CoA or acyl-ACP. In Ureaplasma urealyticum serovar 10 (strain ATCC 33699 / Western), this protein is Glycerol-3-phosphate acyltransferase.